The following is a 34-amino-acid chain: Subtilosin-A (34 aa).

Residues 1–34 (NKGCATCSIGIACLVDGPIPDFECAGATGLGLWG) constitute a cross-link (cyclopeptide (Asn-Gly)). The segment at residues 7–28 (CSIGIACLVDGPIPDFECAGAT) is a cross-link (2-cysteinyl-D-allo-threonine (Cys-Thr)). The segment at residues 13–22 (CLVDGPIPDF) is a cross-link (2-cysteinyl-L-phenylalanine (Cys-Phe)).

Belongs to the bacteriocin class V family. Post-translationally, alpha-amino of Asn-1 is covalently linked with the carboxyl of Gly-34 to form a cyclopeptide. Thioether cross-links are formed between cysteines and the alpha-carbons of other amino acids, Cys-7 to Thr-28 and Cys-13 to Phe-22. In forming this cross-link, Thr-28 is converted to D-amino acid.

Its subcellular location is the secreted. In terms of biological role, has bactericidal activity against some Gram-positive bacteria. The chain is Subtilosin-A from Cytobacillus firmus (Bacillus firmus).